Consider the following 156-residue polypeptide: SsrA-binding protein (156 aa).

It belongs to the SmpB family.

The protein resides in the cytoplasm. Functionally, required for rescue of stalled ribosomes mediated by trans-translation. Binds to transfer-messenger RNA (tmRNA), required for stable association of tmRNA with ribosomes. tmRNA and SmpB together mimic tRNA shape, replacing the anticodon stem-loop with SmpB. tmRNA is encoded by the ssrA gene; the 2 termini fold to resemble tRNA(Ala) and it encodes a 'tag peptide', a short internal open reading frame. During trans-translation Ala-aminoacylated tmRNA acts like a tRNA, entering the A-site of stalled ribosomes, displacing the stalled mRNA. The ribosome then switches to translate the ORF on the tmRNA; the nascent peptide is terminated with the 'tag peptide' encoded by the tmRNA and targeted for degradation. The ribosome is freed to recommence translation, which seems to be the essential function of trans-translation. This Desulfitobacterium hafniense (strain DSM 10664 / DCB-2) protein is SsrA-binding protein.